The chain runs to 126 residues: Holo-[acyl-carrier-protein] synthase (126 aa).

The Mg(2+) site is built by D9 and E58.

Belongs to the P-Pant transferase superfamily. AcpS family. Mg(2+) serves as cofactor.

The protein resides in the cytoplasm. It carries out the reaction apo-[ACP] + CoA = holo-[ACP] + adenosine 3',5'-bisphosphate + H(+). Functionally, transfers the 4'-phosphopantetheine moiety from coenzyme A to a Ser of acyl-carrier-protein. The chain is Holo-[acyl-carrier-protein] synthase from Klebsiella pneumoniae (strain 342).